We begin with the raw amino-acid sequence, 132 residues long: Small ribosomal subunit protein uS8c (132 aa).

Belongs to the universal ribosomal protein uS8 family. Part of the 30S ribosomal subunit.

The protein resides in the plastid. Its subcellular location is the cyanelle. Its function is as follows. One of the primary rRNA binding proteins, it binds directly to 16S rRNA central domain where it helps coordinate assembly of the platform of the 30S subunit. In Cyanophora paradoxa, this protein is Small ribosomal subunit protein uS8c (rps8).